A 362-amino-acid chain; its full sequence is MKYLTVGDLEDCLLNKVDLRRQQISQAVEEVQKVVHHLTTNISNQDIRFQAVPYSDTYNENIKVLAPSQFLVTVPIKGLAGYREAREQHWRYYTLQGTRLPCPLRDPEGLQQWLEVEQFMKSLWQWHETDVNIDGDIVPAKVLLVFRKLVENAVRTCHLSGKVSLLGNRSAVWVAVETSAYQVELELVPAVEIPTTWSKKARWPRCLQRWPSQERVECIKSFGFNLLACSNYHWQLSFLRAEQVLLEQLDEDGGCRRKCFQVMRHLKEDIWCPGNRPVITSHHLQTVLFWTCEKYPHFKDWQVFSKAFLRLVRKLHKCVSQHFLKHYFVRNSNLFQCTNPTELDTVAQKLATFLKNPQIGPP.

The protein belongs to the mab-21 family.

This chain is Protein mab-21-like 3 (MAB21L3), found in Homo sapiens (Human).